A 731-amino-acid polypeptide reads, in one-letter code: Pre-B-cell leukemia transcription factor-interacting protein 1 (731 aa).

Over residues 1–10 (MASCPDSDNS) the composition is skewed to polar residues. Residues 1–155 (MASCPDSDNS…SSSDDDTDVD (155 aa)) form a disordered region. Phosphoserine is present on S43. Composition is skewed to polar residues over residues 62-75 (LFQTESPQSGSILT) and 121-132 (LEGQSPPQSLPS). Phosphoserine occurs at positions 129, 146, 147, and 148. T152 carries the phosphothreonine modification. Residues 270 to 348 (LLLDKLAKEN…QGLEADCVRG (79 aa)) are a coiled coil. Disordered regions lie at residues 354–377 (LSGGRGPQGDKAIREQGPREQEPE), 447–572 (GQDP…DPLP), and 698–731 (LKKRSGKKDKHSQSPRAAGPREGHSHSHHHHHRG). Over residues 364–375 (KAIREQGPREQE) the composition is skewed to basic and acidic residues. A coiled-coil region spans residues 377-417 (ELSFLKQKEQLEAEAQALRQELERQRRLLGSVQQDLERSLQ). Basic and acidic residues-rich tracts occupy residues 472–499 (WSGKEKWWDGQRDRKAEHWKHKKEESGR), 508–543 (QEDREPAGRWKEGRPRVEESGSKKEGKRQGPKEPPR), and 551–569 (SGEKQKQPRWREGTKDSHD). Positions 485–505 (RKAEHWKHKKEESGRERKKNW) match the Nuclear localization signal motif. Phosphoserine is present on S567. The Nuclear localization signal signature appears at 695-720 (DKALKKRSGKKDKHSQSPRAAGPREG). Basic residues predominate over residues 698 to 707 (LKKRSGKKDK).

In terms of assembly, interacts with TEX11. Interacts with ESR1, PBX1, PBX2 and PBX3. As to expression, expressed in early hematopoietic precursors.

The protein resides in the cytoplasm. It is found in the cytoskeleton. It localises to the nucleus. Regulator of pre-B-cell leukemia transcription factors (BPXs) function. Inhibits the binding of PBX1-HOX complex to DNA and blocks the transcriptional activity of E2A-PBX1. Tethers estrogen receptor-alpha (ESR1) to microtubules and allows them to influence estrogen receptors-alpha signaling. The chain is Pre-B-cell leukemia transcription factor-interacting protein 1 (PBXIP1) from Homo sapiens (Human).